The following is a 53-amino-acid chain: uncharacterized protein (53 aa).

Over residues 1-10 (MHILTRSSKN) the composition is skewed to polar residues. Positions 1–25 (MHILTRSSKNAFPRSRSRQDIHISS) are disordered.

This is an uncharacterized protein from Saccharomyces cerevisiae (strain ATCC 204508 / S288c) (Baker's yeast).